The chain runs to 574 residues: VAO-type flavoprotein oxidase VAO615 (574 aa).

Residues 1 to 17 (MPASLLRFLALAGTAVG) form the signal peptide. Disulfide bonds link Cys28/Cys572, Cys64/Cys77, Cys108/Cys118, and Cys450/Cys476. N-linked (GlcNAc...) asparagine glycosylation occurs at Asn47. The N-linked (GlcNAc...) asparagine glycan is linked to Asn105. Residues 120–299 (LGNYPSYVVN…LSMTARLHRD (180 aa)) form the FAD-binding PCMH-type domain. 5 N-linked (GlcNAc...) asparagine glycosylation sites follow: Asn129, Asn211, Asn310, Asn346, and Asn438. The segment at residues 157 to 222 (HDYLGKSTGK…TGHRIVGGTC (66 aa)) is a cross-link (6-(S-cysteinyl)-8alpha-(pros-histidyl)-FAD (His-Cys)).

Belongs to the oxygen-dependent FAD-linked oxidoreductase family. Requires FAD as cofactor. Post-translationally, the FAD cofactor is bound via a bicovalent 6-S-cysteinyl, 8alpha-N1-histidyl FAD linkage.

It is found in the secreted. Functionally, probably oxidoreductase that, when reduced, rapidly reacts with molecular oxygen, a hallmark of flavoprotein oxidases. A large panel of alcohols, including carbohydrates, steroids and secondary alcohols were tested as potential substrates, but none has been identified so far. The protein is VAO-type flavoprotein oxidase VAO615 of Thermothelomyces thermophilus (strain ATCC 42464 / BCRC 31852 / DSM 1799) (Sporotrichum thermophile).